Reading from the N-terminus, the 405-residue chain is 3-hydroxy-3-methylglutaryl-coenzyme A reductase (405 aa).

Residues Glu101 and Asp305 each act as charge relay system in the active site. His400 (proton donor) is an active-site residue.

The protein belongs to the HMG-CoA reductase family. Homodimer.

The protein resides in the cytoplasm. The enzyme catalyses (R)-mevalonate + 2 NADP(+) + CoA = (3S)-3-hydroxy-3-methylglutaryl-CoA + 2 NADPH + 2 H(+). The protein operates within metabolic intermediate biosynthesis; (R)-mevalonate biosynthesis; (R)-mevalonate from acetyl-CoA: step 3/3. Is competitively inhibited by lovastatin (formerly called mevinolin). Lovastatin also blocks the growth of H.salinarum, and this effect is reversed by addition of mevalonate, indicating the critical role that the mevalonate pathway plays in isoprenoid biosynthesis by these archaea. Catalyzes the NADPH-dependent reductive deacylation of (S)-3-hydroxy-3-methylglutaryl-CoA (HMG-CoA) to (R)-mevalonate. Cannot use NADH instead of NADPH. Functions in the mevalonate (MVA) pathway leading to isopentenyl diphosphate (IPP), a key precursor for the biosynthesis of isoprenoid compounds such as archaeal membrane lipids. The protein is 3-hydroxy-3-methylglutaryl-coenzyme A reductase (hmgA) of Halobacterium salinarum (strain ATCC 29341 / DSM 671 / R1).